Reading from the N-terminus, the 302-residue chain is Porphobilinogen deaminase (302 aa).

At C234 the chain carries S-(dipyrrolylmethanemethyl)cysteine.

It belongs to the HMBS family. As to quaternary structure, monomer. Dipyrromethane is required as a cofactor.

The enzyme catalyses 4 porphobilinogen + H2O = hydroxymethylbilane + 4 NH4(+). It functions in the pathway porphyrin-containing compound metabolism; protoporphyrin-IX biosynthesis; coproporphyrinogen-III from 5-aminolevulinate: step 2/4. Its function is as follows. Tetrapolymerization of the monopyrrole PBG into the hydroxymethylbilane pre-uroporphyrinogen in several discrete steps. The protein is Porphobilinogen deaminase of Corynebacterium glutamicum (strain R).